Consider the following 425-residue polypeptide: E3 ubiquitin-protein ligase TRIM31 (425 aa).

An RING-type zinc finger spans residues 16–57 (CPICLDILQKPVTIDCGHNFCLKCITQIGETSCGFFKCPLCK). The B box-type zinc-finger motif lies at 90-131 (RKEATCPRHQEMFHYFCEDDGKFLCFVCRESKDHKSHNVSLI). Positions 95, 98, 117, and 123 each coordinate Zn(2+). Coiled coils occupy residues 126-162 (HNVS…VKAQ) and 270-307 (LELE…DENR). The tract at residues 328 to 360 (HKMNKTSEPGSSSAGGRTTSGPPNHHSSAPSHS) is disordered. The segment covering 336–360 (PGSSSAGGRTTSGPPNHHSSAPSHS) has biased composition (low complexity).

This sequence belongs to the TRIM/RBCC family. As to quaternary structure, may form oligomers. Interacts with isoform p52shc of SHC1. In terms of processing, auto-ubiquitinated (in vitro). As to expression, up-regulated in gastric adenocarcinomas.

The protein resides in the cytoplasm. It localises to the mitochondrion. It catalyses the reaction S-ubiquitinyl-[E2 ubiquitin-conjugating enzyme]-L-cysteine + [acceptor protein]-L-lysine = [E2 ubiquitin-conjugating enzyme]-L-cysteine + N(6)-ubiquitinyl-[acceptor protein]-L-lysine.. Its pathway is protein modification; protein ubiquitination. Its function is as follows. E3 ubiquitin-protein ligase that acts as a regulator of antiviral immune response and inflammation by mediating ubiquitination of substrates. Acts as a regulator of innate immune defense against viruses by mediating 'Lys-63'-linked ubiquitination of MAVS, promoting MAVS polymerization and formation of three-stranded helical filaments on mitochondria. Acts as a negative regulator of the NLRP3 inflammasome by catalyzing 'Lys-48'-linked ubiquitination of NLRP3, leading to its degradation. Regulator of Src-induced anchorage independent cell growth. This chain is E3 ubiquitin-protein ligase TRIM31, found in Homo sapiens (Human).